The primary structure comprises 221 residues: MLRPVHCVVPFKSSGCKTRLSSALSGEQRWQLAVAMLRDVLRTLRSIGMVTVLARPGMREDIIADLDATLRFSELELGDALNGFIDENTAAGWPADILIVMADLPLIREEDVLEMIRTPGGVVLAPGRGGGTNMILIRDSRFRTRYKGLSFAKHKREAEELGIEAGYCYSYRAGCDIDEPGDLIEILLHTNGESRALLERFGLRILESDGRGRLDQTQSNE.

It belongs to the CofC family. As to quaternary structure, homodimer.

It carries out the reaction (2S)-2-phospholactate + GTP + H(+) = (2S)-lactyl-2-diphospho-5'-guanosine + diphosphate. It participates in cofactor biosynthesis; coenzyme F420 biosynthesis. Functionally, guanylyltransferase that catalyzes the activation of (2S)-2-phospholactate (2-PL) as (2S)-lactyl-2-diphospho-5'-guanosine, via the condensation of 2-PL with GTP. It is involved in the biosynthesis of coenzyme F420, a hydride carrier cofactor. This is 2-phospho-L-lactate guanylyltransferase from Methanothrix thermoacetophila (strain DSM 6194 / JCM 14653 / NBRC 101360 / PT) (Methanosaeta thermophila).